We begin with the raw amino-acid sequence, 304 residues long: Dihydroorotate dehydrogenase B (NAD(+)), catalytic subunit (304 aa).

FMN contacts are provided by residues Ser-21 and 45–46 (KA). Residues Lys-45 and 69 to 73 (NAIGL) contribute to the substrate site. FMN is bound by residues Asn-99 and Asn-127. Asn-127 contributes to the substrate binding site. Cys-130 acts as the Nucleophile in catalysis. Residues Lys-165 and Ile-191 each coordinate FMN. Residue 192–193 (NT) coordinates substrate. Residues Gly-217, 243 to 244 (GG), and 265 to 266 (GT) each bind FMN.

It belongs to the dihydroorotate dehydrogenase family. Type 1 subfamily. In terms of assembly, heterotetramer of 2 PyrK and 2 PyrD type B subunits. It depends on FMN as a cofactor.

The protein localises to the cytoplasm. It catalyses the reaction (S)-dihydroorotate + NAD(+) = orotate + NADH + H(+). Its pathway is pyrimidine metabolism; UMP biosynthesis via de novo pathway; orotate from (S)-dihydroorotate (NAD(+) route): step 1/1. In terms of biological role, catalyzes the conversion of dihydroorotate to orotate with NAD(+) as electron acceptor. This is Dihydroorotate dehydrogenase B (NAD(+)), catalytic subunit (pyrD) from Shouchella clausii (strain KSM-K16) (Alkalihalobacillus clausii).